A 452-amino-acid chain; its full sequence is Bifunctional F420 biosynthesis protein FbiB (452 aa).

A coenzyme F420:L-glutamate ligase region spans residues 1 to 248 (MVSAPGDHAG…AGEEDLFWLG (248 aa)). GTP contacts are provided by residues 24-27 (LPEF), serine 54, and lysine 59. Aspartate 113 provides a ligand contact to a divalent metal cation. Residue asparagine 116 coordinates GTP. A divalent metal cation-binding residues include aspartate 154 and threonine 155. The tract at residues 249–452 (TAEAVERGRR…RDPGDGLVER (204 aa)) is dehydro-coenzyme F420-0 reductase. Residues 264-268 (RRSVR) and alanine 292 each bind FMN. Aspartate 324 serves as a coordination point for coenzyme F420-(gamma-Glu)n. Glycine 403 and arginine 440 together coordinate FMN.

It in the N-terminal section; belongs to the CofE family. Mg(2+) is required as a cofactor. The cofactor is Mn(2+). It depends on K(+) as a cofactor.

It carries out the reaction oxidized coenzyme F420-0 + GTP + L-glutamate = oxidized coenzyme F420-1 + GDP + phosphate + H(+). The catalysed reaction is oxidized coenzyme F420-0 + FMN + H(+) = dehydro coenzyme F420-0 + FMNH2. It catalyses the reaction oxidized coenzyme F420-1 + GTP + L-glutamate = oxidized coenzyme F420-2 + GDP + phosphate + H(+). The protein operates within cofactor biosynthesis; coenzyme F420 biosynthesis. Functionally, bifunctional enzyme that catalyzes the GTP-dependent successive addition of two or more gamma-linked L-glutamates to the L-lactyl phosphodiester of 7,8-didemethyl-8-hydroxy-5-deazariboflavin (F420-0) to form polyglutamated F420 derivatives, and the FMNH2-dependent reduction of dehydro-F420-0 to form F420-0. This chain is Bifunctional F420 biosynthesis protein FbiB, found in Nocardia farcinica (strain IFM 10152).